A 488-amino-acid chain; its full sequence is G-patch domain and KOW motifs-containing protein (488 aa).

The span at 1-11 (MAGRESPPPSA) shows a compositional bias: pro residues. A disordered region spans residues 1–20 (MAGRESPPPSAPSMAPISFG). The residue at position 2 (Ala2) is an N-acetylalanine. Residue Ser25 is modified to Phosphoserine; by PKA. A disordered region spans residues 72 to 97 (IQNGSRRQPLSKNPKPSSETSTVLMS). Polar residues predominate over residues 73–95 (QNGSRRQPLSKNPKPSSETSTVL). Residue Ser115 is modified to Phosphoserine. The region spanning 164-210 (VEAYGLAMLRGMGWKPGKGIGNTFSQVVKPRVNSIRPKGLGLGANRM) is the G-patch domain. 2 disordered regions span residues 216–241 (ASVGSHHPPRPDGDRENDKEGQPQGL) and 295–367 (QEFD…PRNK). The segment covering 224 to 236 (PRPDGDRENDKEG) has biased composition (basic and acidic residues). Positions 231–258 (ENDKEGQPQGLMHGRAVVVLSGPYRGLY) constitute a KOW 1 domain. Residues 307 to 331 (VSQTSTEQQNRATGTASSLKAAQNQ) are compositionally biased toward polar residues. Basic and acidic residues-rich tracts occupy residues 332–341 (EDSKRRQKGS) and 349–363 (PDRQDGPVPKTEKAA). The KOW 2 domain occupies 401–428 (PDTCVCRTDEGRVLEDVREDMLETLIPK). Ser485 carries the phosphoserine modification.

This sequence belongs to the MOS2 family. Component of the minor spliceosome, which splices U12-type introns. Interacts with PRKX, PRKACB and DHX16. In terms of processing, phosphorylation regulates its ability to bind RNA.

It is found in the nucleus. RNA-binding protein involved in pre-mRNA splicing. As a component of the minor spliceosome, involved in the splicing of U12-type introns in pre-mRNAs. In Mus musculus (Mouse), this protein is G-patch domain and KOW motifs-containing protein (Gpkow).